The following is a 375-amino-acid chain: Queuine tRNA-ribosyltransferase (375 aa).

Asp-89 serves as the catalytic Proton acceptor. Residues 89–93 (DSGGF), Asp-143, Gln-187, and Gly-214 each bind substrate. The segment at 245 to 251 (GVGKPED) is RNA binding. The active-site Nucleophile is the Asp-264. The segment at 269–273 (TRNAR) is RNA binding; important for wobble base 34 recognition. Cys-302, Cys-304, Cys-307, and His-333 together coordinate Zn(2+).

This sequence belongs to the queuine tRNA-ribosyltransferase family. Homodimer. Within each dimer, one monomer is responsible for RNA recognition and catalysis, while the other monomer binds to the replacement base PreQ1. Zn(2+) is required as a cofactor.

The enzyme catalyses 7-aminomethyl-7-carbaguanine + guanosine(34) in tRNA = 7-aminomethyl-7-carbaguanosine(34) in tRNA + guanine. It functions in the pathway tRNA modification; tRNA-queuosine biosynthesis. In terms of biological role, catalyzes the base-exchange of a guanine (G) residue with the queuine precursor 7-aminomethyl-7-deazaguanine (PreQ1) at position 34 (anticodon wobble position) in tRNAs with GU(N) anticodons (tRNA-Asp, -Asn, -His and -Tyr). Catalysis occurs through a double-displacement mechanism. The nucleophile active site attacks the C1' of nucleotide 34 to detach the guanine base from the RNA, forming a covalent enzyme-RNA intermediate. The proton acceptor active site deprotonates the incoming PreQ1, allowing a nucleophilic attack on the C1' of the ribose to form the product. After dissociation, two additional enzymatic reactions on the tRNA convert PreQ1 to queuine (Q), resulting in the hypermodified nucleoside queuosine (7-(((4,5-cis-dihydroxy-2-cyclopenten-1-yl)amino)methyl)-7-deazaguanosine). The protein is Queuine tRNA-ribosyltransferase of Escherichia coli O81 (strain ED1a).